A 579-amino-acid polypeptide reads, in one-letter code: Peptidoglycan D,D-transpeptidase FtsI (579 aa).

A helical transmembrane segment spans residues F15–D35. Residue S294 is the Acyl-ester intermediate of the active site. The segment at D558–G579 is disordered. Residues P561–N570 show a composition bias toward polar residues.

It belongs to the transpeptidase family. FtsI subfamily.

The protein resides in the cell inner membrane. It carries out the reaction Preferential cleavage: (Ac)2-L-Lys-D-Ala-|-D-Ala. Also transpeptidation of peptidyl-alanyl moieties that are N-acyl substituents of D-alanine.. The protein operates within cell wall biogenesis; peptidoglycan biosynthesis. In terms of biological role, catalyzes cross-linking of the peptidoglycan cell wall at the division septum. Binds penicillin. This is Peptidoglycan D,D-transpeptidase FtsI from Pseudomonas aeruginosa (strain ATCC 15692 / DSM 22644 / CIP 104116 / JCM 14847 / LMG 12228 / 1C / PRS 101 / PAO1).